The sequence spans 192 residues: Phosphoheptose isomerase (192 aa).

The SIS domain maps to 37–192 (LADSFKAGGK…IQLIEKEMVK (156 aa)). 52 to 54 (NGG) provides a ligand contact to substrate. Positions 61 and 65 each coordinate Zn(2+). Residues E65, 93–94 (ND), 119–121 (STS), S124, and Q172 contribute to the substrate site. Q172 and H180 together coordinate Zn(2+).

This sequence belongs to the SIS family. GmhA subfamily. Homotetramer. The cofactor is Zn(2+).

The protein resides in the cytoplasm. It catalyses the reaction 2 D-sedoheptulose 7-phosphate = D-glycero-alpha-D-manno-heptose 7-phosphate + D-glycero-beta-D-manno-heptose 7-phosphate. Its pathway is carbohydrate biosynthesis; D-glycero-D-manno-heptose 7-phosphate biosynthesis; D-glycero-alpha-D-manno-heptose 7-phosphate and D-glycero-beta-D-manno-heptose 7-phosphate from sedoheptulose 7-phosphate: step 1/1. In terms of biological role, catalyzes the isomerization of sedoheptulose 7-phosphate in D-glycero-D-manno-heptose 7-phosphate. The chain is Phosphoheptose isomerase from Salmonella dublin (strain CT_02021853).